A 398-amino-acid chain; its full sequence is Na(+)/H(+) antiporter NhaA (398 aa).

The next 11 helical transmembrane spans lie at 21-41 (LGGY…NSPL), 66-86 (VLHW…GLEI), 101-121 (IVLP…VYLL), 132-152 (GWAI…ALLG), 161-181 (IFLT…IAVF), 184-204 (AELN…LCVL), 216-236 (LLVG…ATLA), 274-294 (LLIV…GMGI), 305-325 (IALG…WLAI), 343-363 (GVAL…ALAF), and 374-394 (IGVL…LRVL).

It belongs to the NhaA Na(+)/H(+) (TC 2.A.33) antiporter family.

It localises to the cell inner membrane. It catalyses the reaction Na(+)(in) + 2 H(+)(out) = Na(+)(out) + 2 H(+)(in). Functionally, na(+)/H(+) antiporter that extrudes sodium in exchange for external protons. The chain is Na(+)/H(+) antiporter NhaA from Bordetella bronchiseptica (strain ATCC BAA-588 / NCTC 13252 / RB50) (Alcaligenes bronchisepticus).